A 194-amino-acid chain; its full sequence is Protein GrpE (194 aa).

2 stretches are compositionally biased toward basic and acidic residues: residues 1–19 and 26–44; these read MSKE…ENTS and KKEA…NQKL. The interval 1–44 is disordered; that stretch reads MSKEEFPSEKNLDKEENTSKPKKAVKKEAAKGEETKKNNENQKL.

The protein belongs to the GrpE family. As to quaternary structure, homodimer.

The protein resides in the cytoplasm. Functionally, participates actively in the response to hyperosmotic and heat shock by preventing the aggregation of stress-denatured proteins, in association with DnaK and GrpE. It is the nucleotide exchange factor for DnaK and may function as a thermosensor. Unfolded proteins bind initially to DnaJ; upon interaction with the DnaJ-bound protein, DnaK hydrolyzes its bound ATP, resulting in the formation of a stable complex. GrpE releases ADP from DnaK; ATP binding to DnaK triggers the release of the substrate protein, thus completing the reaction cycle. Several rounds of ATP-dependent interactions between DnaJ, DnaK and GrpE are required for fully efficient folding. This chain is Protein GrpE, found in Lactobacillus acidophilus (strain ATCC 700396 / NCK56 / N2 / NCFM).